The primary structure comprises 680 residues: Dihydroxyacetone phosphate acyltransferase (680 aa).

Phosphoserine occurs at positions 12 and 17. An HXXXXD motif motif is present at residues His-162 to Asp-167. Lys-643 bears the N6-acetyllysine mark. Positions Ala-678–Leu-680 match the Microbody targeting signal motif.

Belongs to the GPAT/DAPAT family. In terms of assembly, part of a heterotrimeric complex composed of GNPAT, AGPS and a modified form of GNPAT.

It localises to the peroxisome membrane. The catalysed reaction is dihydroxyacetone phosphate + an acyl-CoA = a 1-acylglycerone 3-phosphate + CoA. It catalyses the reaction dihydroxyacetone phosphate + hexadecanoyl-CoA = 1-hexadecanoylglycerone 3-phosphate + CoA. It functions in the pathway membrane lipid metabolism; glycerophospholipid metabolism. Dihydroxyacetonephosphate acyltransferase catalyzing the first step in the biosynthesis of plasmalogens, a subset of phospholipids that differ from other glycerolipids by having an alkyl chain attached through a vinyl ether linkage at the sn-1 position of the glycerol backbone, and which unique physical properties have an impact on various aspects of cell signaling and membrane biology. The chain is Dihydroxyacetone phosphate acyltransferase from Bos taurus (Bovine).